A 977-amino-acid chain; its full sequence is Alanine--tRNA ligase (977 aa).

Positions 512–535 (SQVDSKLQSSTPAGTGSYDSKQVS) are disordered. Zn(2+) contacts are provided by H618, H622, C720, and H724.

This sequence belongs to the class-II aminoacyl-tRNA synthetase family. Requires Zn(2+) as cofactor.

Its subcellular location is the cytoplasm. It carries out the reaction tRNA(Ala) + L-alanine + ATP = L-alanyl-tRNA(Ala) + AMP + diphosphate. Catalyzes the attachment of alanine to tRNA(Ala) in a two-step reaction: alanine is first activated by ATP to form Ala-AMP and then transferred to the acceptor end of tRNA(Ala). Also edits incorrectly charged Ser-tRNA(Ala) and Gly-tRNA(Ala) via its editing domain. The polypeptide is Alanine--tRNA ligase (Leptospira interrogans serogroup Icterohaemorrhagiae serovar Lai (strain 56601)).